Consider the following 398-residue polypeptide: uncharacterized protein (398 aa).

Helical transmembrane passes span proline 43–leucine 65, isoleucine 89–serine 108, threonine 156–leucine 173, isoleucine 180–valine 198, leucine 224–alanine 246, isoleucine 259–glycine 281, serine 291–isoleucine 311, leucine 316–valine 338, leucine 351–tryptophan 373, and threonine 380–phenylalanine 397.

Belongs to the major facilitator superfamily.

It localises to the cell membrane. This is an uncharacterized protein from Methanocaldococcus jannaschii (strain ATCC 43067 / DSM 2661 / JAL-1 / JCM 10045 / NBRC 100440) (Methanococcus jannaschii).